Reading from the N-terminus, the 196-residue chain is Molybdenum cofactor guanylyltransferase (196 aa).

GTP contacts are provided by residues 12–14 (LAG), Lys-25, Asn-53, Asp-71, and Asp-101. Asp-101 contributes to the Mg(2+) binding site.

It belongs to the MobA family. In terms of assembly, monomer. Mg(2+) serves as cofactor.

It localises to the cytoplasm. The catalysed reaction is Mo-molybdopterin + GTP + H(+) = Mo-molybdopterin guanine dinucleotide + diphosphate. In terms of biological role, transfers a GMP moiety from GTP to Mo-molybdopterin (Mo-MPT) cofactor (Moco or molybdenum cofactor) to form Mo-molybdopterin guanine dinucleotide (Mo-MGD) cofactor. The chain is Molybdenum cofactor guanylyltransferase from Bordetella petrii (strain ATCC BAA-461 / DSM 12804 / CCUG 43448).